Reading from the N-terminus, the 125-residue chain is 14 kDa phosphohistidine phosphatase (125 aa).

Residue alanine 2 is modified to N-acetylalanine. Position 21 (lysine 21) interacts with substrate. The Proton acceptor role is filled by histidine 53. A substrate-binding site is contributed by 94–96 (SMG).

As to quaternary structure, monomer.

The protein localises to the cytoplasm. It carries out the reaction N(pros)-phospho-L-histidyl-[protein] + H2O = L-histidyl-[protein] + phosphate. It catalyses the reaction N(tele)-phospho-L-histidyl-[protein] + H2O = L-histidyl-[protein] + phosphate. Functionally, exhibits phosphohistidine phosphatase activity. In terms of biological role, may have a significant involvement in neuronal signaling. The sequence is that of 14 kDa phosphohistidine phosphatase (PHPT1) from Oryctolagus cuniculus (Rabbit).